The sequence spans 241 residues: MGQKINPIGLRLGINRTWDSRWFAGKQEYGKLLHEDVKIREILHKELKQAAVARIVIERPHKKCRVTIHSARPGVVIGKKGADIDKLRKRVADITSSDVVINIVEIRKPELDATLVAESIAQQLERRVAFRRAMKRAVQSAMRLGAEGIRINCSGRLGGAEIARMEWYREGRVPLHTLRADIDYGVATAFTTFGTCGVKVWIFKGEILEHDPMAQDKRMAEGETGGGGDRGGRQRRDNAAV.

Positions 39–107 (IREILHKELK…DVVINIVEIR (69 aa)) constitute a KH type-2 domain. The disordered stretch occupies residues 217-241 (KRMAEGETGGGGDRGGRQRRDNAAV). Over residues 230–241 (RGGRQRRDNAAV) the composition is skewed to basic and acidic residues.

The protein belongs to the universal ribosomal protein uS3 family. In terms of assembly, part of the 30S ribosomal subunit. Forms a tight complex with proteins S10 and S14.

Functionally, binds the lower part of the 30S subunit head. Binds mRNA in the 70S ribosome, positioning it for translation. This Bradyrhizobium diazoefficiens (strain JCM 10833 / BCRC 13528 / IAM 13628 / NBRC 14792 / USDA 110) protein is Small ribosomal subunit protein uS3.